The sequence spans 646 residues: Serine/threonine-protein kinase max-2 (646 aa).

Positions 19–40 (FSPSDKDKDRDDEMKPSSSAMD) are disordered. The segment covering 22–33 (SDKDKDRDDEMK) has biased composition (basic and acidic residues). The CRIB domain maps to 41–54 (ISQPYNTVHRVHVG). The interval 136-345 (LQCSNGSATS…PPPPEEPPVR (210 aa)) is disordered. Composition is skewed to low complexity over residues 142–157 (SATSPSTSVSASSSSA) and 167–180 (LSTASSTDTSLSLS). The span at 196–205 (SAPQLKTFTG) shows a compositional bias: polar residues. The segment covering 214 to 223 (SPFPPQPPVL) has biased composition (pro residues). A compositionally biased stretch (low complexity) spans 229–245 (TASAVATTTTNPTTSNG). Over residues 246-262 (APPPVPGSKGPPVPPKP) the composition is skewed to pro residues. Low complexity-rich tracts occupy residues 273–307 (SSGCSSPQQYSSARSVGNSLSNGSVVSTTSSDGDV) and 323–334 (KNGNTTTNKTTV). The Protein kinase domain occupies 376 to 627 (YEMKKQIGVG…TTELLAHPFL (252 aa)). Residues 382-390 (IGVGASGTV) and Lys-405 each bind ATP. Residue Asp-496 is the Proton acceptor of the active site.

The protein belongs to the protein kinase superfamily. STE Ser/Thr protein kinase family. STE20 subfamily. Interacts with mlk-1; the interaction is independent of max-2 and mlk-1 kinase activities. Interacts with mig-2 (GTP-bound form). It depends on Mg(2+) as a cofactor.

Its subcellular location is the perikaryon. It is found in the cell projection. It localises to the dendrite. The protein localises to the cytoplasm. The catalysed reaction is L-seryl-[protein] + ATP = O-phospho-L-seryl-[protein] + ADP + H(+). It carries out the reaction L-threonyl-[protein] + ATP = O-phospho-L-threonyl-[protein] + ADP + H(+). Its function is as follows. Serine/threonine-protein kinase, which phosphorylates mlk-1. Involved in the stress response to heavy metals by activating the mlk-1/mek-1/kgb-1 pathway. In ventral cord commissural motoneurons, required for dorsal axon guidance downstream of unc-6/netrin repulsion receptor unc-5 and probably of Rho GTPases ced-10 and mig-2. Plays a redundant role with mig-10 in orientating axonal growth of HSN neurons. Plays a redundant role with pak-1 in P neuroblast migration and in distal tip cell (DTC)-mediated guidance of gonad elongation probably downstream of Rho GTPases. In association with pak-2, plays a role in embryogenesis. In association with pak-1, may be involved in spermatogenesis. The sequence is that of Serine/threonine-protein kinase max-2 from Caenorhabditis elegans.